The primary structure comprises 23 residues: Laccase-1 (23 aa).

Belongs to the multicopper oxidase family. Cu cation serves as cofactor.

It localises to the secreted. It catalyses the reaction 4 hydroquinone + O2 = 4 benzosemiquinone + 2 H2O. Strongly inhibited by sodium azide, sodium cyanide, Li(+), Sn(+), Hg(2+), and the disulfide-reducing agents beta-mercaptoethanol, dithiothreitol and thioglycolic acid. Moderately inhibited by Mn(2+) and Fe(2+), inhibition by these metal ions is stronger at 0.1 mM than at 1 mM. Moderately inhibited by Cu(2+). In terms of biological role, lignin degradation and detoxification of lignin-derived products. Demethylates eucalyptus hard wood lignin. Has high activity against the non-phenolic heterocyclic compound ABTS, and lower activity against the phenolic substrates syringic acid, caffeic acid, syringaldazine, vanillic acid, catechol and levodihydroxyphenylalanine. The chain is Laccase-1 from Galerina sp.